The following is a 309-amino-acid chain: Porphobilinogen deaminase (309 aa).

The residue at position 241 (Cys241) is an S-(dipyrrolylmethanemethyl)cysteine.

This sequence belongs to the HMBS family. As to quaternary structure, monomer. Dipyrromethane serves as cofactor.

It carries out the reaction 4 porphobilinogen + H2O = hydroxymethylbilane + 4 NH4(+). The protein operates within porphyrin-containing compound metabolism; protoporphyrin-IX biosynthesis; coproporphyrinogen-III from 5-aminolevulinate: step 2/4. In terms of biological role, tetrapolymerization of the monopyrrole PBG into the hydroxymethylbilane pre-uroporphyrinogen in several discrete steps. The chain is Porphobilinogen deaminase from Bacillus cereus (strain G9842).